Here is a 393-residue protein sequence, read N- to C-terminus: Arginine biosynthesis bifunctional protein ArgJ (393 aa).

Substrate-binding residues include threonine 142, lysine 168, threonine 179, glutamate 265, asparagine 388, and threonine 393. Threonine 179 (nucleophile) is an active-site residue.

The protein belongs to the ArgJ family. In terms of assembly, heterotetramer of two alpha and two beta chains.

It localises to the cytoplasm. It carries out the reaction N(2)-acetyl-L-ornithine + L-glutamate = N-acetyl-L-glutamate + L-ornithine. It catalyses the reaction L-glutamate + acetyl-CoA = N-acetyl-L-glutamate + CoA + H(+). The protein operates within amino-acid biosynthesis; L-arginine biosynthesis; L-ornithine and N-acetyl-L-glutamate from L-glutamate and N(2)-acetyl-L-ornithine (cyclic): step 1/1. It functions in the pathway amino-acid biosynthesis; L-arginine biosynthesis; N(2)-acetyl-L-ornithine from L-glutamate: step 1/4. Catalyzes two activities which are involved in the cyclic version of arginine biosynthesis: the synthesis of N-acetylglutamate from glutamate and acetyl-CoA as the acetyl donor, and of ornithine by transacetylation between N(2)-acetylornithine and glutamate. The polypeptide is Arginine biosynthesis bifunctional protein ArgJ (Geobacter sulfurreducens (strain ATCC 51573 / DSM 12127 / PCA)).